The following is a 343-amino-acid chain: Holliday junction branch migration complex subunit RuvB (343 aa).

A large ATPase domain (RuvB-L) region spans residues 4–193; that stretch reads TDNLTAAQPQ…FGIVSRLEFY (190 aa). Residues leucine 32, arginine 33, glycine 74, lysine 77, threonine 78, threonine 79, 140-142, arginine 183, tyrosine 193, and arginine 230 contribute to the ATP site; that span reads EDY. Threonine 78 contributes to the Mg(2+) binding site. The small ATPAse domain (RuvB-S) stretch occupies residues 194 to 264; the sequence is ENRDLTTIVS…VADAALSMLD (71 aa). Positions 267–343 are head domain (RuvB-H); the sequence is AQGLDVMDRK…YLHFGLPVEK (77 aa). DNA contacts are provided by arginine 322 and arginine 327.

The protein belongs to the RuvB family. In terms of assembly, homohexamer. Forms an RuvA(8)-RuvB(12)-Holliday junction (HJ) complex. HJ DNA is sandwiched between 2 RuvA tetramers; dsDNA enters through RuvA and exits via RuvB. An RuvB hexamer assembles on each DNA strand where it exits the tetramer. Each RuvB hexamer is contacted by two RuvA subunits (via domain III) on 2 adjacent RuvB subunits; this complex drives branch migration. In the full resolvosome a probable DNA-RuvA(4)-RuvB(12)-RuvC(2) complex forms which resolves the HJ.

The protein localises to the cytoplasm. It catalyses the reaction ATP + H2O = ADP + phosphate + H(+). The RuvA-RuvB-RuvC complex processes Holliday junction (HJ) DNA during genetic recombination and DNA repair, while the RuvA-RuvB complex plays an important role in the rescue of blocked DNA replication forks via replication fork reversal (RFR). RuvA specifically binds to HJ cruciform DNA, conferring on it an open structure. The RuvB hexamer acts as an ATP-dependent pump, pulling dsDNA into and through the RuvAB complex. RuvB forms 2 homohexamers on either side of HJ DNA bound by 1 or 2 RuvA tetramers; 4 subunits per hexamer contact DNA at a time. Coordinated motions by a converter formed by DNA-disengaged RuvB subunits stimulates ATP hydrolysis and nucleotide exchange. Immobilization of the converter enables RuvB to convert the ATP-contained energy into a lever motion, pulling 2 nucleotides of DNA out of the RuvA tetramer per ATP hydrolyzed, thus driving DNA branch migration. The RuvB motors rotate together with the DNA substrate, which together with the progressing nucleotide cycle form the mechanistic basis for DNA recombination by continuous HJ branch migration. Branch migration allows RuvC to scan DNA until it finds its consensus sequence, where it cleaves and resolves cruciform DNA. This Neisseria gonorrhoeae (strain NCCP11945) protein is Holliday junction branch migration complex subunit RuvB.